The chain runs to 537 residues: ATP synthase subunit beta (537 aa).

A disordered region spans residues 1-61 (MAKAATSKKE…SSPQKGGKKG (61 aa)). Residues 7-18 (SKKEASKVEAKK) show a composition bias toward basic and acidic residues. Over residues 44–55 (NSPSRTGSSSPQ) the composition is skewed to polar residues. 209 to 216 (GGAGVGKT) lines the ATP pocket.

Belongs to the ATPase alpha/beta chains family. In terms of assembly, F-type ATPases have 2 components, CF(1) - the catalytic core - and CF(0) - the membrane proton channel. CF(1) has five subunits: alpha(3), beta(3), gamma(1), delta(1), epsilon(1). CF(0) has three main subunits: a(1), b(2) and c(9-12). The alpha and beta chains form an alternating ring which encloses part of the gamma chain. CF(1) is attached to CF(0) by a central stalk formed by the gamma and epsilon chains, while a peripheral stalk is formed by the delta and b chains.

The protein localises to the cell inner membrane. It catalyses the reaction ATP + H2O + 4 H(+)(in) = ADP + phosphate + 5 H(+)(out). Its function is as follows. Produces ATP from ADP in the presence of a proton gradient across the membrane. The catalytic sites are hosted primarily by the beta subunits. In Bartonella bacilliformis (strain ATCC 35685 / KC583 / Herrer 020/F12,63), this protein is ATP synthase subunit beta.